Reading from the N-terminus, the 270-residue chain is GTP cyclohydrolase FolE2 (270 aa).

It belongs to the GTP cyclohydrolase IV family.

The enzyme catalyses GTP + H2O = 7,8-dihydroneopterin 3'-triphosphate + formate + H(+). The protein operates within cofactor biosynthesis; 7,8-dihydroneopterin triphosphate biosynthesis; 7,8-dihydroneopterin triphosphate from GTP: step 1/1. In terms of biological role, converts GTP to 7,8-dihydroneopterin triphosphate. This chain is GTP cyclohydrolase FolE2, found in Cupriavidus pinatubonensis (strain JMP 134 / LMG 1197) (Cupriavidus necator (strain JMP 134)).